The primary structure comprises 422 residues: Tyrosine--tRNA ligase (422 aa).

Residue Tyr-37 coordinates L-tyrosine. The 'HIGH' region motif lies at 42–51 (PTEESLHIGH). L-tyrosine-binding residues include Tyr-175 and Gln-179. Positions 235–239 (KFGKT) match the 'KMSKS' region motif. Residue Lys-238 participates in ATP binding. The S4 RNA-binding domain occupies 357-414 (KDLQEALVLTSLAQSRTQAKNMIISNSISINTEKIRKNHIFHEKDKLFGKFTLLSRGK).

This sequence belongs to the class-I aminoacyl-tRNA synthetase family. TyrS type 1 subfamily. Homodimer.

It localises to the cytoplasm. It carries out the reaction tRNA(Tyr) + L-tyrosine + ATP = L-tyrosyl-tRNA(Tyr) + AMP + diphosphate + H(+). Functionally, catalyzes the attachment of tyrosine to tRNA(Tyr) in a two-step reaction: tyrosine is first activated by ATP to form Tyr-AMP and then transferred to the acceptor end of tRNA(Tyr). This is Tyrosine--tRNA ligase from Buchnera aphidicola subsp. Acyrthosiphon pisum (strain Tuc7).